A 117-amino-acid polypeptide reads, in one-letter code: UPF0344 protein GK0697 (117 aa).

The next 4 membrane-spanning stretches (helical) occupy residues 1–21 (MTHAHITSWLITIVLFFLAVS), 39–59 (LFYILTIVTGLLLLHSIASIS), 60–80 (ALYWLKALAGLWVIGAMEMVL), and 97–117 (VIALAVTLFLGLLLPLGFDLF).

It belongs to the UPF0344 family.

The protein localises to the cell membrane. The chain is UPF0344 protein GK0697 from Geobacillus kaustophilus (strain HTA426).